Consider the following 147-residue polypeptide: MPHFLVLNGPNLNRLGKREPAVYGSKTLTDLETDLFQFAERANIQLTFFQSNHEGDLIDALHEAEEQYDGVVFNPGAFTHYSYALRDAIASISLSVVEVHISNVHKREEFRHHSVLAPVCQGQIVGLGLEGYKLAIRYLVSEGGAVS.

Tyr-23 serves as the catalytic Proton acceptor. Substrate contacts are provided by Asn-74, His-80, and Asp-87. The active-site Proton donor is His-100. Substrate contacts are provided by residues Ile-101–Ser-102 and Arg-111.

The protein belongs to the type-II 3-dehydroquinase family. Homododecamer.

The catalysed reaction is 3-dehydroquinate = 3-dehydroshikimate + H2O. It functions in the pathway metabolic intermediate biosynthesis; chorismate biosynthesis; chorismate from D-erythrose 4-phosphate and phosphoenolpyruvate: step 3/7. Catalyzes a trans-dehydration via an enolate intermediate. The protein is 3-dehydroquinate dehydratase of Bacillus pumilus (strain SAFR-032).